A 251-amino-acid chain; its full sequence is MTEAQRHQILLEMLAQLGFVTVEKVVERLGISPATARRDINKLDERGKLKKVRNGAEAITQQRPRWTPMNLHQAQNHDEKVRIAKAASQLVNPGESVVINCGSTAFLLGREMCGKPVQIITNYLPLANYLIDQEHDSVIIMGGQYNKSQSITLSPQGSENSLYAGHWMFTSGKGLTAEGLYKTDMLTAMAEQKMLSVVGKLVVLVDSSKIGERAGMLFSRADQIDMLITGKNANPEILQQLEAQGVSILRV.

In terms of domain architecture, HTH deoR-type spans 3–58 (EAQRHQILLEMLAQLGFVTVEKVVERLGISPATARRDINKLDERGKLKKVRNGAEA). The segment at residues 20–39 (VTVEKVVERLGISPATARRD) is a DNA-binding region (H-T-H motif).

Its subcellular location is the cytoplasm. Represses ulaG and the ulaABCDEF operon. The polypeptide is HTH-type transcriptional regulator UlaR (Shigella sonnei (strain Ss046)).